The chain runs to 142 residues: Baculoviral IAP repeat-containing protein 5 (142 aa).

A BIR repeat occupies 18-88 (RVSTFKNWPF…KHSSGCAFLS (71 aa)). Ser-20 carries the phosphoserine; by AURKC modification. Lys-23 bears the N6-acetyllysine mark. A Phosphothreonine; by CDK1 and CDK15 modification is found at Thr-34. Phosphothreonine; by CK2; in vitro is present on Thr-48. Residues Cys-57, Cys-60, His-77, and Cys-84 each coordinate Zn(2+). N6-acetyllysine is present on residues Lys-90, Lys-110, Lys-112, and Lys-115. The residue at position 117 (Thr-117) is a Phosphothreonine; by AURKB.

It belongs to the IAP family. Monomer or homodimer. Exists as a homodimer in the apo state and as a monomer in the CPC-bound state. The monomer protects cells against apoptosis more efficiently than the dimer. Only the dimeric form is capable of enhancing tubulin stability in cells. When phosphorylated, interacts with LAMTOR5/HBXIP; the resulting complex binds pro-CASP9, as well as active CASP9, but much less efficiently. Component of the chromosomal passenger complex (CPC) composed of at least BIRC5/survivin, CDCA8/borealin, INCENP, AURKB or AURKC; in the complex forms a triple-helix bundle-based subcomplex with INCENP and CDCA8. Interacts with JTB. Interacts (via BIR domain) with histone H3 phosphorylated at 'Thr-3' (H3pT3). Interacts with EVI5. Interacts with GTP-bound RAN in both the S and M phases of the cell cycle. Interacts with USP9X. Interacts with tubulin. Interacts with BIRC2/c-IAP1. The monomeric form interacts with XIAP/BIRC4. Both the dimeric and monomeric form can interact with DIABLO/SMAC. Interacts with BIRC6/bruce. Interacts with FBXL7; this interaction facilitates the polyubiquitination and subsequent proteasomal degradation of BIRC5 by the SCF(FBXL7) E3 ubiquitin-protein ligase complex. Post-translationally, ubiquitinated by the Cul9-RING ubiquitin-protein ligase complex, leading to its degradation. Ubiquitination is required for centrosomal targeting. Deubiquitinated by USP35 or USP38; leading to stabilization. In vitro phosphorylation at Thr-117 by AURKB prevents interaction with INCENP and localization to mitotic chromosomes. Phosphorylation at Thr-48 by CK2 is critical for its mitotic and anti-apoptotic activities. Phosphorylation at Thr-34 by CDK15 is critical for its anti-apoptotic activity. Phosphorylation at Ser-20 by AURKC is critical for regulation of proper chromosome alignment and segregation, and possibly cytokinesis. As to expression, expressed in spleen, lung, brain, heart, kidney and intestine (at protein level). Expressed in cochlea including the organ of Corti, the lateral wall, the interdental cells of the Limbus as well as in cells of the cochlear nerve and the spiral ganglions (at protein level). Also expressed in Schwann cells (at protein level). Not expressed in cells of the inner and outer sulcus or the Reissner's membrane (at protein level).

The protein localises to the cytoplasm. It localises to the nucleus. Its subcellular location is the chromosome. It is found in the centromere. The protein resides in the cytoskeleton. The protein localises to the spindle. It localises to the kinetochore. Its subcellular location is the midbody. Its function is as follows. Multitasking protein that has dual roles in promoting cell proliferation and preventing apoptosis. Component of a chromosome passage protein complex (CPC) which is essential for chromosome alignment and segregation during mitosis and cytokinesis. Acts as an important regulator of the localization of this complex; directs CPC movement to different locations from the inner centromere during prometaphase to midbody during cytokinesis and participates in the organization of the center spindle by associating with polymerized microtubules. Involved in the recruitment of CPC to centromeres during early mitosis via association with histone H3 phosphorylated at 'Thr-3' (H3pT3) during mitosis. The complex with RAN plays a role in mitotic spindle formation by serving as a physical scaffold to help deliver the RAN effector molecule TPX2 to microtubules. May counteract a default induction of apoptosis in G2/M phase. The acetylated form represses STAT3 transactivation of target gene promoters. May play a role in neoplasia. Inhibitor of CASP3 and CASP7. Essential for the maintenance of mitochondrial integrity and function. This is Baculoviral IAP repeat-containing protein 5 from Cavia porcellus (Guinea pig).